A 151-amino-acid chain; its full sequence is Ribosome maturation factor RimP (151 aa).

It belongs to the RimP family.

It localises to the cytoplasm. In terms of biological role, required for maturation of 30S ribosomal subunits. This Vibrio cholerae serotype O1 (strain ATCC 39541 / Classical Ogawa 395 / O395) protein is Ribosome maturation factor RimP.